The following is a 254-amino-acid chain: Probable phosphatase Sbal_1472 (254 aa).

The Zn(2+) site is built by histidine 8, histidine 10, histidine 16, histidine 41, glutamate 74, histidine 102, histidine 132, aspartate 193, and histidine 195.

The protein belongs to the PHP family. Requires Zn(2+) as cofactor.

The protein is Probable phosphatase Sbal_1472 of Shewanella baltica (strain OS155 / ATCC BAA-1091).